A 99-amino-acid chain; its full sequence is Putative pterin-4-alpha-carbinolamine dehydratase (99 aa).

This sequence belongs to the pterin-4-alpha-carbinolamine dehydratase family.

The enzyme catalyses (4aS,6R)-4a-hydroxy-L-erythro-5,6,7,8-tetrahydrobiopterin = (6R)-L-erythro-6,7-dihydrobiopterin + H2O. In Saccharolobus islandicus (strain M.16.27) (Sulfolobus islandicus), this protein is Putative pterin-4-alpha-carbinolamine dehydratase.